Reading from the N-terminus, the 190-residue chain is Homeobox protein SEBOX (190 aa).

The segment covering 1-11 (MPSPVDASSAD) has biased composition (low complexity). Disordered regions lie at residues 1-24 (MPSP…RKRT) and 82-161 (ILSP…VHPS). Positions 19–78 (HRRKRTTFSKGQLLELERAFAAWPYPNISTHEHLAWVTCLPEAKVQVWFQKRWAKIIKNR) form a DNA-binding region, homeobox. Polar residues predominate over residues 89–100 (CPQSSCSLPDTL).

It belongs to the paired homeobox family.

It localises to the nucleus. Probable transcription factor involved in the control of specification of mesoderm and endoderm. The polypeptide is Homeobox protein SEBOX (SEBOX) (Homo sapiens (Human)).